A 331-amino-acid polypeptide reads, in one-letter code: Thiamine-monophosphate kinase (331 aa).

The Mg(2+) site is built by D43, T59, T60, and D61. H68 contributes to the substrate binding site. The Mg(2+) site is built by D90, D138, and D231. 137–138 (GD) is a binding site for ATP. S233 provides a ligand contact to ATP. D234 contributes to the Mg(2+) binding site. The substrate site is built by E284 and W328.

The protein belongs to the thiamine-monophosphate kinase family.

It catalyses the reaction thiamine phosphate + ATP = thiamine diphosphate + ADP. Its pathway is cofactor biosynthesis; thiamine diphosphate biosynthesis; thiamine diphosphate from thiamine phosphate: step 1/1. Catalyzes the ATP-dependent phosphorylation of thiamine-monophosphate (TMP) to form thiamine-pyrophosphate (TPP), the active form of vitamin B1. This chain is Thiamine-monophosphate kinase, found in Corynebacterium glutamicum (strain ATCC 13032 / DSM 20300 / JCM 1318 / BCRC 11384 / CCUG 27702 / LMG 3730 / NBRC 12168 / NCIMB 10025 / NRRL B-2784 / 534).